A 475-amino-acid polypeptide reads, in one-letter code: Exodeoxyribonuclease 7 large subunit (475 aa).

A disordered region spans residues 452 to 475 (DHGLNRSSKSKRIKSKQDDQGTLF). Over residues 466-475 (SKQDDQGTLF) the composition is skewed to basic and acidic residues.

The protein belongs to the XseA family. As to quaternary structure, heterooligomer composed of large and small subunits.

The protein resides in the cytoplasm. The catalysed reaction is Exonucleolytic cleavage in either 5'- to 3'- or 3'- to 5'-direction to yield nucleoside 5'-phosphates.. Bidirectionally degrades single-stranded DNA into large acid-insoluble oligonucleotides, which are then degraded further into small acid-soluble oligonucleotides. The sequence is that of Exodeoxyribonuclease 7 large subunit from Bartonella quintana (strain Toulouse) (Rochalimaea quintana).